We begin with the raw amino-acid sequence, 148 residues long: MFDTTLLILLGLAALGFISHNTTVAISILVLIIVRVTPLNTFFPWIEKQGLTVGIIILTIGVMAPIASGTLPPSTLIHSFMNWKSLLAIAVGVFVSWLGGRGVSLMGTQPHLVAGLLVGTVLGVALFRGVPVGPLIAAGIISLFIGKS.

Transmembrane regions (helical) follow at residues 14 to 34 (ALGF…LIIV), 51 to 71 (LTVG…SGTL), 86 to 106 (LLAI…VSLM), and 121 to 141 (VLGV…AGII).

It belongs to the UPF0756 family.

The protein resides in the cell membrane. This Klebsiella pneumoniae (strain 342) protein is UPF0756 membrane protein KPK_3307.